A 524-amino-acid chain; its full sequence is GMP synthase [glutamine-hydrolyzing] (524 aa).

The region spanning 5-195 is the Glutamine amidotransferase type-1 domain; the sequence is KVIVIDFGGQ…VRGVCGCAGT (191 aa). Cys82 functions as the Nucleophile in the catalytic mechanism. Active-site residues include His169 and Glu171. The GMPS ATP-PPase domain occupies 196–389; the sequence is WKMDSFVKNT…LGLPDYLVFR (194 aa). Residue 223 to 229 participates in ATP binding; sequence SGGVDSS.

In terms of assembly, homodimer.

The enzyme catalyses XMP + L-glutamine + ATP + H2O = GMP + L-glutamate + AMP + diphosphate + 2 H(+). It functions in the pathway purine metabolism; GMP biosynthesis; GMP from XMP (L-Gln route): step 1/1. Its function is as follows. Catalyzes the synthesis of GMP from XMP. In Agathobacter rectalis (strain ATCC 33656 / DSM 3377 / JCM 17463 / KCTC 5835 / VPI 0990) (Eubacterium rectale), this protein is GMP synthase [glutamine-hydrolyzing].